A 518-amino-acid chain; its full sequence is G-protein coupled receptor 161 (518 aa).

Residues 1-26 (MNSSSDGANEGAGAAADNGPTKVAES) lie on the Extracellular side of the membrane. Residue asparagine 2 is glycosylated (N-linked (GlcNAc...) asparagine). The helical transmembrane segment at 27–47 (IAIIIIDILICLGNLVIVVTL) threads the bilayer. Over 48 to 59 (YKKSYLLSLSNK) the chain is Cytoplasmic. A helical transmembrane segment spans residues 60-80 (FVFSLTFSNLLLSMLVLPFVV). Topologically, residues 81–97 (VSSILREWIFGVVWCNF) are extracellular. Cysteine 95 and cysteine 173 are joined by a disulfide. N-linked (GlcNAc...) asparagine glycosylation is present at asparagine 96. Residues 98–118 (SALLYMLISSASMLTLGIIAI) traverse the membrane as a helical segment. Residues 119–138 (DRYYAVLYPMVYPMKITGNR) lie on the Cytoplasmic side of the membrane. Residues 139–159 (AVLALVYVWLHSLIGCLPPLF) form a helical membrane-spanning segment. Topologically, residues 160–185 (GWSTLEFDHFKWMCVAAWHKEAGYTA) are extracellular. Residues 186–206 (FWQVWCALLPFIVMMICYGFI) form a helical membrane-spanning segment. At 207–264 (FRVARIKARKIHCGTVIIVQEASQKNGRKNSSTSTSSSGSRKNGFSSIVYSANQCKAL) the chain is on the cytoplasmic side. Residues 265–285 (ITILVVIGAFVLTWGPYMIVI) form a helical membrane-spanning segment. Residues 286–301 (STEALKGKNSVSPVLE) lie on the Extracellular side of the membrane. Residues 302 to 322 (TLATWLSFTSAICHPLIYGLW) form a helical membrane-spanning segment. The Cytoplasmic portion of the chain corresponds to 323–518 (NKTVRKELLG…GNIETSKCDV (196 aa)). The disordered stretch occupies residues 429–448 (EVEQKNDARTMPTQPTAPSE). The segment covering 439 to 448 (MPTQPTAPSE) has biased composition (polar residues).

This sequence belongs to the G-protein coupled receptor 1 family.

It is found in the cell projection. The protein resides in the cilium membrane. It localises to the cell membrane. In terms of biological role, key negative regulator of Shh signaling during neural tube development. Recruited to primary cilia and acts as a regulator of the PKA-dependent basal repression machinery in Shh signaling by increasing cAMP levels, leading to promote the PKA-dependent processing of gli3 into gli3r and repress the Shh signaling. In presence of shh, it is removed from primary cilia, preventing its activity and allowing activation of the Shh signaling. The polypeptide is G-protein coupled receptor 161 (gpr161) (Xenopus tropicalis (Western clawed frog)).